The chain runs to 230 residues: MAVEYHLTIKEMAAELRPRERLAAHGVQSLSDAELLAILLRSGTVTTTAIDLANQILSRFGGLRGLAEAGIEELQAVKGVGPAKSAEVRAAFELGRRAACRPGEWQPTVRTPEEAAGLVMEEMRYFDREHFWALVLNTKNRVLAVEKVSVGTLNSSSVHPRELFKNAIRRSAAALILVHNHPSGDPAPSPQDIELTQRLFEAGEIVGIKVLDHIIIGDNKFTSLKLEGLF.

The region spanning 108–230 (TVRTPEEAAG…FTSLKLEGLF (123 aa)) is the MPN domain. Residues His-179, His-181, and Asp-192 each contribute to the Zn(2+) site. A JAMM motif motif is present at residues 179–192 (HNHPSGDPAPSPQD).

This sequence belongs to the UPF0758 family.

This is UPF0758 protein Daud_1467 from Desulforudis audaxviator (strain MP104C).